Here is a 214-residue protein sequence, read N- to C-terminus: Orotate phosphoribosyltransferase (214 aa).

Residue K26 coordinates 5-phospho-alpha-D-ribose 1-diphosphate. 34–35 (FF) contacts orotate. 5-phospho-alpha-D-ribose 1-diphosphate-binding positions include 72–73 (YK), R99, K100, K103, H105, and 124–132 (DDVITAGTA). Orotate contacts are provided by T128 and R157.

The protein belongs to the purine/pyrimidine phosphoribosyltransferase family. PyrE subfamily. As to quaternary structure, homodimer. The cofactor is Mg(2+).

It carries out the reaction orotidine 5'-phosphate + diphosphate = orotate + 5-phospho-alpha-D-ribose 1-diphosphate. It participates in pyrimidine metabolism; UMP biosynthesis via de novo pathway; UMP from orotate: step 1/2. Functionally, catalyzes the transfer of a ribosyl phosphate group from 5-phosphoribose 1-diphosphate to orotate, leading to the formation of orotidine monophosphate (OMP). This chain is Orotate phosphoribosyltransferase, found in Pseudomonas fluorescens (strain ATCC BAA-477 / NRRL B-23932 / Pf-5).